A 243-amino-acid chain; its full sequence is 4-hydroxy-tetrahydrodipicolinate reductase (243 aa).

NAD(+)-binding positions include 9–14 (GANGKM), 78–80 (GTS), and 104–107 (APNF). The active-site Proton donor/acceptor is the H134. H135 contributes to the (S)-2,3,4,5-tetrahydrodipicolinate binding site. K138 functions as the Proton donor in the catalytic mechanism. Residue 144-145 (GT) coordinates (S)-2,3,4,5-tetrahydrodipicolinate.

The protein belongs to the DapB family.

Its subcellular location is the cytoplasm. It catalyses the reaction (S)-2,3,4,5-tetrahydrodipicolinate + NAD(+) + H2O = (2S,4S)-4-hydroxy-2,3,4,5-tetrahydrodipicolinate + NADH + H(+). The catalysed reaction is (S)-2,3,4,5-tetrahydrodipicolinate + NADP(+) + H2O = (2S,4S)-4-hydroxy-2,3,4,5-tetrahydrodipicolinate + NADPH + H(+). The protein operates within amino-acid biosynthesis; L-lysine biosynthesis via DAP pathway; (S)-tetrahydrodipicolinate from L-aspartate: step 4/4. In terms of biological role, catalyzes the conversion of 4-hydroxy-tetrahydrodipicolinate (HTPA) to tetrahydrodipicolinate. The protein is 4-hydroxy-tetrahydrodipicolinate reductase of Legionella pneumophila (strain Paris).